The chain runs to 436 residues: GTPase Der (436 aa).

EngA-type G domains follow at residues 4 to 167 and 176 to 351; these read PVVA…KDEE and IKLS…ENHK. Residues 10–17, 57–61, 119–122, 182–189, 229–233, and 294–297 contribute to the GTP site; these read GRPNVGKS, DTGGI, NKVD, DTAGM, and NKWD. In terms of domain architecture, KH-like spans 352–436; sequence KRVQSSTLNE…PIRIIPRKRN (85 aa).

It belongs to the TRAFAC class TrmE-Era-EngA-EngB-Septin-like GTPase superfamily. EngA (Der) GTPase family. Associates with the 50S ribosomal subunit.

In terms of biological role, GTPase that plays an essential role in the late steps of ribosome biogenesis. In Staphylococcus carnosus (strain TM300), this protein is GTPase Der.